A 195-amino-acid polypeptide reads, in one-letter code: Capsid protein (195 aa).

Positions N148 to C195 are disordered. A compositionally biased stretch (basic residues) spans V161–S188. Phosphoserine; by host occurs at positions 167, 174, and 182. A 1; half-length repeat occupies S167–T172. The tract at residues S167 to S188 is 3 X 7 AA repeats of S-P-R-R-R-[PR]-S. Residues R170–R187 carry the Bipartite nuclear localization signal motif. 2 tandem repeats follow at residues S174 to S180 and S182 to S188. An RNA binding region spans residues A189–C195.

Belongs to the orthohepadnavirus core antigen family. In terms of assembly, homodimerizes, then multimerizes. Interacts with cytosol exposed regions of viral L glycoprotein present in the reticulum-to-Golgi compartment. Interacts with human FLNB. Phosphorylated form interacts with host importin alpha; this interaction depends on the exposure of the NLS, which itself depends upon genome maturation and/or phosphorylation of the capsid protein. Interacts with host NUP153. Phosphorylated by host SRPK1, SRPK2, and maybe protein kinase C or GAPDH. Phosphorylation is critical for pregenomic RNA packaging. Protein kinase C phosphorylation is stimulated by HBx protein and may play a role in transport of the viral genome to the nucleus at the late step during the viral replication cycle.

Its subcellular location is the virion. The protein localises to the host cytoplasm. Its function is as follows. Self assembles to form an icosahedral capsid. Most capsids appear to be large particles with an icosahedral symmetry of T=4 and consist of 240 copies of capsid protein, though a fraction forms smaller T=3 particles consisting of 180 capsid proteins. Entering capsids are transported along microtubules to the nucleus. Phosphorylation of the capsid is thought to induce exposure of nuclear localization signal in the C-terminal portion of the capsid protein that allows binding to the nuclear pore complex via the importin (karyopherin-) alpha and beta. Capsids are imported in intact form through the nuclear pore into the nuclear basket, where it probably binds NUP153. Only capsids that contain the mature viral genome can release the viral DNA and capsid protein into the nucleoplasm. Immature capsids get stuck in the basket. Capsids encapsulate the pre-genomic RNA and the P protein. Pre-genomic RNA is reverse-transcribed into DNA while the capsid is still in the cytoplasm. The capsid can then either be directed to the nucleus, providing more genomes for transcription, or bud through the endoplasmic reticulum to provide new virions. This is Capsid protein from Hepatitis B virus genotype G (isolate IG29227/2000) (HBV-G).